A 127-amino-acid chain; its full sequence is Fluoride-specific ion channel FluC (127 aa).

Transmembrane regions (helical) follow at residues Leu7–Leu27, Phe37–Phe57, Phe70–Ile90, and Ile102–Ile122. Na(+) is bound by residues Gly77 and Thr80.

The protein belongs to the fluoride channel Fluc/FEX (TC 1.A.43) family.

The protein localises to the cell inner membrane. It catalyses the reaction fluoride(in) = fluoride(out). Its activity is regulated as follows. Na(+) is not transported, but it plays an essential structural role and its presence is essential for fluoride channel function. Fluoride-specific ion channel. Important for reducing fluoride concentration in the cell, thus reducing its toxicity. The protein is Fluoride-specific ion channel FluC of Histophilus somni (strain 129Pt) (Haemophilus somnus).